A 355-amino-acid polypeptide reads, in one-letter code: 3-dehydroquinate synthase (355 aa).

NAD(+)-binding positions include glycine 105–aspartate 109, threonine 129–serine 130, lysine 142, lysine 151, and threonine 169–threonine 172. 3 residues coordinate Zn(2+): glutamate 184, histidine 246, and histidine 263.

It belongs to the sugar phosphate cyclases superfamily. Dehydroquinate synthase family. NAD(+) is required as a cofactor. It depends on Co(2+) as a cofactor. The cofactor is Zn(2+).

It is found in the cytoplasm. The catalysed reaction is 7-phospho-2-dehydro-3-deoxy-D-arabino-heptonate = 3-dehydroquinate + phosphate. The protein operates within metabolic intermediate biosynthesis; chorismate biosynthesis; chorismate from D-erythrose 4-phosphate and phosphoenolpyruvate: step 2/7. Its function is as follows. Catalyzes the conversion of 3-deoxy-D-arabino-heptulosonate 7-phosphate (DAHP) to dehydroquinate (DHQ). This is 3-dehydroquinate synthase from Streptococcus agalactiae serotype III (strain NEM316).